A 1525-amino-acid chain; its full sequence is Multidrug resistance-associated protein 1 (1525 aa).

At 1 to 33 (MGIESLCSADASEPFWDWNLTWHTENPDFTQCF) the chain is on the extracellular side. The helical transmembrane segment at 34–54 (QNTVLVWVPCIYLWVCFPAYF) threads the bilayer. Over 55–74 (LYLRSHDRGYIQMSILNKAK) the chain is Cytoplasmic. Residues 75–95 (TALGLILWIVCWADLFYSFWE) traverse the membrane as a helical segment. The Extracellular segment spans residues 96-100 (RSQNI). Residues 101–121 (FRAPFFLISPTVLGITMLLAT) traverse the membrane as a helical segment. The Cytoplasmic segment spans residues 122 to 133 (FLIQHERLKGVQ). A helical membrane pass occupies residues 134–154 (SSGVMMIFWLISLLCATVIFR). At 155–172 (SKIMLALNTDTEVDAFRY) the chain is on the extracellular side. A helical membrane pass occupies residues 173–193 (VTFCTYFILLLVQLILSCFPE). Over 194–315 (KPPLFSEAVN…RSSEASLSKV (122 aa)) the chain is Cytoplasmic. The chain crosses the membrane as a helical span at residues 316–336 (LYKTFGPYFLMSFLFKAAHDL). The 284-residue stretch at 324–607 (FLMSFLFKAA…LPMVISSIVE (284 aa)) folds into the ABC transmembrane type-1 1 domain. Over 337–362 (LMFTGPEILKLLINFVNNKSAPNWQG) the chain is Extracellular. Residues 363-383 (YFYTGLLFVCACLQTLILHQY) form a helical membrane-spanning segment. Residues 384-439 (FHICFVTGMRLKTAIVGVIYRKALVITNSARKTSTVGEIVNLMSVDAQRFMDLATY) are Cytoplasmic-facing. A helical transmembrane segment spans residues 440 to 460 (INMIWSAPLQVILALYLLWRN). At 461-463 (LGP) the chain is on the extracellular side. A helical transmembrane segment spans residues 464-484 (SVLAGVAVMILLVPINAVMAM). The Cytoplasmic portion of the chain corresponds to 485–546 (KTKTYQVAQM…VLKKSAYLAA (62 aa)). A helical membrane pass occupies residues 547–567 (MGTFTWVCAPFLVALSTFAVY). Topologically, residues 568–589 (VKVNKNNILDAQKAFVSLALFN) are extracellular. The helical transmembrane segment at 590 to 610 (ILRFPLNILPMVISSIVEASV) threads the bilayer. At 611–961 (SLKRLRVFLS…VKATVYWEYM (351 aa)) the chain is on the cytoplasmic side. The ABC transporter 1 domain maps to 641-865 (IVVKNATFSW…DGAFAEFLRT (225 aa)). 675–682 (GQVGCGKS) provides a ligand contact to ATP. Composition is skewed to polar residues over residues 871 to 882 (QSMESSDASSPS) and 908 to 928 (SNSS…STAE). Disordered regions lie at residues 871–891 (QSME…PVEN) and 908–930 (SNSS…AELQ). The helical transmembrane segment at 962 to 982 (KAIGLYISFLSVFLFMCNHIA) threads the bilayer. In terms of domain architecture, ABC transmembrane type-1 2 spans 969 to 1250 (SFLSVFLFMC…LVRMTSDLET (282 aa)). Topologically, residues 983-1019 (SLASNYWLSLWTDDPVVNGTQQYTNVRLGVYGALGIS) are extracellular. Residues 1020-1040 (QGIAVFGYSMAVSIGGIFASR) traverse the membrane as a helical segment. The Cytoplasmic segment spans residues 1041-1083 (HLHLDLLHNVLRSPMSFFERTPSGNLVSRFSKEIDTIDSTIPP). A helical transmembrane segment spans residues 1084–1104 (IIKMFMGSTFNVIGACIIILL). Position 1105 (Ala1105) is a topological domain, extracellular. Residues 1106 to 1126 (TPIAAVVIPPLGLVYLLVQRF) traverse the membrane as a helical segment. The Cytoplasmic segment spans residues 1127 to 1197 (YVATSRQLKR…VANRWLAVRL (71 aa)). The chain crosses the membrane as a helical span at residues 1198-1218 (EFVGNCIVLFAALFAVIARNK). Over 1219–1220 (LS) the chain is Extracellular. Residues 1221–1241 (PGLIGLSVSYSLQITAYLNWL) form a helical membrane-spanning segment. Topologically, residues 1242–1525 (VRMTSDLETN…YSMAKDSGLA (284 aa)) are cytoplasmic. An ABC transporter 2 domain is found at 1289-1521 (FRGFGLRYRE…KGLFYSMAKD (233 aa)). Residue 1321-1328 (GRTGAGKS) participates in ATP binding.

The protein belongs to the ABC transporter superfamily. ABCC family. Conjugate transporter (TC 3.A.1.208) subfamily.

It is found in the cell membrane. It catalyses the reaction ATP + H2O + xenobioticSide 1 = ADP + phosphate + xenobioticSide 2.. It carries out the reaction an S-substituted glutathione(in) + ATP + H2O = an S-substituted glutathione(out) + ADP + phosphate + H(+). The catalysed reaction is sphing-4-enine 1-phosphate(in) + ATP + H2O = sphing-4-enine 1-phosphate(out) + ADP + phosphate + H(+). The enzyme catalyses leukotriene C4(in) + ATP + H2O = leukotriene C4(out) + ADP + phosphate + H(+). It catalyses the reaction 17beta-estradiol 17-O-(beta-D-glucuronate)(in) + ATP + H2O = 17beta-estradiol 17-O-(beta-D-glucuronate)(out) + ADP + phosphate + H(+). It carries out the reaction 2',3'-cGAMP(in) + ATP + H2O = 2',3'-cGAMP(out) + ADP + phosphate + H(+). Functionally, mediates export of organic anions and drugs from the cytoplasm. Mediates ATP-dependent transport of glutathione and glutathione conjugates, leukotriene C4, estradiol-17-beta-o-glucuronide and other xenobiotics. Hydrolyzes ATP with low efficiency. Mediates ATP-dependent, GSH-independent cyclic GMP-AMP (cGAMP) export. Thus, by limiting intracellular cGAMP concentrations negatively regulates the cGAS-STING pathway. This chain is Multidrug resistance-associated protein 1, found in Gallus gallus (Chicken).